Reading from the N-terminus, the 2195-residue chain is Genome polyprotein (2195 aa).

The N-myristoyl glycine; by host moiety is linked to residue Gly2. The Cytoplasmic portion of the chain corresponds to 2–1505 (GAQVSTQKTG…HVSRAFICLQ (1504 aa)). The amphipathic alpha-helix stretch occupies residues 567–583 (LLQGDVVEAVENAVARV). Catalysis depends on for protease 2A activity residues His882 and Asp900. Zn(2+) contacts are provided by Cys917 and Cys919. Cys971 serves as the catalytic For protease 2A activity. The Zn(2+) site is built by Cys977 and His979. The tract at residues 1111-1183 (NNGWLKKFTE…EQSAPSQSDQ (73 aa)) is membrane-binding. The oligomerization stretch occupies residues 1111 to 1249 (NNGWLKKFTE…SPGAGKSVAT (139 aa)). The segment at 1132 to 1136 (SIKIQ) is RNA-binding. Residues 1215–1371 (EKKMSNYIQF…SMYSQNGKIN (157 aa)) enclose the SF3 helicase domain. Zn(2+) contacts are provided by Cys1379, Cys1391, and Cys1396. The C4-type; degenerate zinc finger occupies 1379–1396 (CDEECCPVNFKRCCPLVC). The interval 1423–1430 (EYNHRHSV) is RNA-binding. The oligomerization stretch occupies residues 1434-1439 (LEALFQ). An intramembrane segment occupies 1506–1521 (ALTTFVSVAGIIYIIY). Topologically, residues 1522-2195 (KLFAGFQGAY…TLRRKWLDSF (674 aa)) are cytoplasmic. Tyr1531 carries the post-translational modification O-(5'-phospho-RNA)-tyrosine. The region spanning 1551–1729 (GPAFEFAVAM…FSAALLKHYF (179 aa)) is the Peptidase C3 domain. Active-site for protease 3C activity residues include His1590, Glu1621, and Cys1697. One can recognise a RdRp catalytic domain in the interval 1960-2076 (GHLIAFDYSG…SYPWPIDASL (117 aa)). 2 residues coordinate Mg(2+): Asp1966 and Asp2062.

It belongs to the picornaviruses polyprotein family. Interacts with capsid protein VP1 and capsid protein VP3 to form heterotrimeric protomers. As to quaternary structure, interacts with capsid protein VP0, and capsid protein VP3 to form heterotrimeric protomers. Five protomers subsequently associate to form pentamers which serve as building blocks for the capsid. Interacts with capsid protein VP2, capsid protein VP3 and capsid protein VP4 following cleavage of capsid protein VP0. In terms of assembly, interacts with capsid protein VP1 and capsid protein VP3 in the mature capsid. Interacts with capsid protein VP0 and capsid protein VP1 to form heterotrimeric protomers. Five protomers subsequently associate to form pentamers which serve as building blocks for the capsid. Interacts with capsid protein VP4 in the mature capsid. Interacts with protein 2C; this interaction may be important for virion morphogenesis. As to quaternary structure, interacts with capsid protein VP1 and capsid protein VP3. In terms of assembly, homodimer. Homohexamer; forms a hexameric ring structure with 6-fold symmetry characteristic of AAA+ ATPases. Interacts (via N-terminus) with host RTN3 (via reticulon domain); this interaction is important for viral replication. Interacts with capsid protein VP3; this interaction may be important for virion morphogenesis. As to quaternary structure, interacts with protein 3CD. In terms of assembly, homodimer. Interacts with host GBF1. Interacts (via GOLD domain) with host ACBD3 (via GOLD domain); this interaction allows the formation of a viral protein 3A/ACBD3 heterotetramer with a 2:2 stoichiometry, which will stimulate the recruitment of host PI4KB in order to synthesize PI4P at the viral RNA replication sites. Interacts with RNA-directed RNA polymerase. As to quaternary structure, interacts with protein 3AB and with RNA-directed RNA polymerase. In terms of assembly, interacts with Viral protein genome-linked and with protein 3CD. Mg(2+) serves as cofactor. In terms of processing, specific enzymatic cleavages in vivo by the viral proteases yield processing intermediates and the mature proteins. Post-translationally, myristoylation is required for the formation of pentamers during virus assembly. Further assembly of 12 pentamers and a molecule of genomic RNA generates the provirion. During virion maturation, immature virions are rendered infectious following cleavage of VP0 into VP4 and VP2. This maturation seems to be an autocatalytic event triggered by the presence of RNA in the capsid and it is followed by a conformational change infectious virion. In terms of processing, myristoylation is required during RNA encapsidation and formation of the mature virus particle. Post-translationally, VPg is uridylylated by the polymerase into VPg-pUpU. This acts as a nucleotide-peptide primer for the genomic RNA replication.

Its subcellular location is the virion. It is found in the host cytoplasm. The protein localises to the host cytoplasmic vesicle membrane. It localises to the host nucleus. The catalysed reaction is a ribonucleoside 5'-triphosphate + H2O = a ribonucleoside 5'-diphosphate + phosphate + H(+). It carries out the reaction Selective cleavage of Tyr-|-Gly bond in the picornavirus polyprotein.. The enzyme catalyses RNA(n) + a ribonucleoside 5'-triphosphate = RNA(n+1) + diphosphate. It catalyses the reaction Selective cleavage of Gln-|-Gly bond in the poliovirus polyprotein. In other picornavirus reactions Glu may be substituted for Gln, and Ser or Thr for Gly.. Replication or transcription is subject to high level of random mutations by the nucleotide analog ribavirin. Its function is as follows. Forms an icosahedral capsid of pseudo T=3 symmetry with capsid proteins VP2 and VP3. The capsid is 300 Angstroms in diameter, composed of 60 copies of each capsid protein and enclosing the viral positive strand RNA genome. Capsid protein VP1 mainly forms the vertices of the capsid. Capsid protein VP1 interacts with host cell receptor to provide virion attachment to target host cells. This attachment induces virion internalization. Tyrosine kinases are probably involved in the entry process. After binding to its receptor, the capsid undergoes conformational changes. Capsid protein VP1 N-terminus (that contains an amphipathic alpha-helix) and capsid protein VP4 are externalized. Together, they shape a pore in the host membrane through which viral genome is translocated to host cell cytoplasm. Forms an icosahedral capsid of pseudo T=3 symmetry with capsid proteins VP2 and VP3. The capsid is 300 Angstroms in diameter, composed of 60 copies of each capsid protein and enclosing the viral positive strand RNA genome. In terms of biological role, lies on the inner surface of the capsid shell. After binding to the host receptor, the capsid undergoes conformational changes. Capsid protein VP4 is released, Capsid protein VP1 N-terminus is externalized, and together, they shape a pore in the host membrane through which the viral genome is translocated into the host cell cytoplasm. Functionally, component of immature procapsids, which is cleaved into capsid proteins VP4 and VP2 after maturation. Allows the capsid to remain inactive before the maturation step. Its function is as follows. Cysteine protease that cleaves viral polyprotein and specific host proteins. It is responsible for the autocatalytic cleavage between the P1 and P2 regions, which is the first cleavage occurring in the polyprotein. Also cleaves the host translation initiation factor EIF4G1, in order to shut down the capped cellular mRNA translation. Inhibits the host nucleus-cytoplasm protein and RNA trafficking by cleaving host members of the nuclear pores. Counteracts stress granule formation probably by antagonizing its assembly or promoting its dissassembly. Plays an essential role in the virus replication cycle by acting as a viroporin. Creates a pore in the host endoplasmic reticulum and as a consequence releases Ca2+ in the cytoplasm of infected cell. In turn, high levels of cytoplasmic calcium may trigger membrane trafficking and transport of viral ER-associated proteins to viroplasms, sites of viral genome replication. In terms of biological role, induces and associates with structural rearrangements of intracellular membranes. Displays RNA-binding, nucleotide binding and NTPase activities. May play a role in virion morphogenesis and viral RNA encapsidation by interacting with the capsid protein VP3. Functionally, localizes the viral replication complex to the surface of membranous vesicles. Together with protein 3CD binds the Cis-Active RNA Element (CRE) which is involved in RNA synthesis initiation. Acts as a cofactor to stimulate the activity of 3D polymerase, maybe through a nucleid acid chaperone activity. Its function is as follows. Localizes the viral replication complex to the surface of membranous vesicles. It inhibits host cell endoplasmic reticulum-to-Golgi apparatus transport and causes the disassembly of the Golgi complex, possibly through GBF1 interaction. This would result in depletion of MHC, trail receptors and IFN receptors at the host cell surface. Plays an essential role in viral RNA replication by recruiting ACBD3 and PI4KB at the viral replication sites, thereby allowing the formation of the rearranged membranous structures where viral replication takes place. Acts as a primer for viral RNA replication and remains covalently bound to viral genomic RNA. VPg is uridylylated prior to priming replication into VPg-pUpU. The oriI viral genomic sequence may act as a template for this. The VPg-pUpU is then used as primer on the genomic RNA poly(A) by the RNA-dependent RNA polymerase to replicate the viral genome. During genome replication, the VPg-RNA linkage is removed by the host TDP2, thereby accelerating replication. During the late stage of the replication cycle, host TDP2 is excluded from sites of viral RNA synthesis and encapsidation, allowing for the generation of progeny virions. In terms of biological role, involved in the viral replication complex and viral polypeptide maturation. It exhibits protease activity with a specificity and catalytic efficiency that is different from protease 3C. Protein 3CD lacks polymerase activity. The 3C domain in the context of protein 3CD may have an RNA binding activity. Protein 3CD binds to the 5'UTR of the viral genome. Functionally, replicates the viral genomic RNA on the surface of intracellular membranes. May form linear arrays of subunits that propagate along a strong head-to-tail interaction called interface-I. Covalently attaches UMP to a tyrosine of VPg, which is used to prime RNA synthesis. The positive stranded RNA genome is first replicated at virus induced membranous vesicles, creating a dsRNA genomic replication form. This dsRNA is then used as template to synthesize positive stranded RNA genomes. ss(+)RNA genomes are either translated, replicated or encapsidated. Its function is as follows. Major viral protease that mediates proteolytic processing of the polyprotein. Cleaves host EIF5B, contributing to host translation shutoff. Also cleaves host PABPC1, contributing to host translation shutoff. Cleaves host NLRP1, triggers host N-glycine-mediated degradation of the autoinhibitory NLRP1 N-terminal fragment. The protein is Genome polyprotein of Echovirus 11 (strain Gregory).